A 658-amino-acid chain; its full sequence is UvrABC system protein B (658 aa).

One can recognise a Helicase ATP-binding domain in the interval 26–414 (AGLKKGLKHQ…PDVIEQIIRP (389 aa)). Residue 39–46 (GATGTGKT) coordinates ATP. A Beta-hairpin motif is present at residues 92 to 115 (YYDYYQPEAYVPQSDTYIEKDASI). The 163-residue stretch at 430–592 (QIDDLMDEIN…ITPKTIRKEI (163 aa)) folds into the Helicase C-terminal domain. Positions 622–658 (DIFIEGMEHEMKEAAKALDFERAAELRDALLEIKAEG) constitute a UVR domain.

This sequence belongs to the UvrB family. As to quaternary structure, forms a heterotetramer with UvrA during the search for lesions. Interacts with UvrC in an incision complex.

The protein localises to the cytoplasm. Functionally, the UvrABC repair system catalyzes the recognition and processing of DNA lesions. A damage recognition complex composed of 2 UvrA and 2 UvrB subunits scans DNA for abnormalities. Upon binding of the UvrA(2)B(2) complex to a putative damaged site, the DNA wraps around one UvrB monomer. DNA wrap is dependent on ATP binding by UvrB and probably causes local melting of the DNA helix, facilitating insertion of UvrB beta-hairpin between the DNA strands. Then UvrB probes one DNA strand for the presence of a lesion. If a lesion is found the UvrA subunits dissociate and the UvrB-DNA preincision complex is formed. This complex is subsequently bound by UvrC and the second UvrB is released. If no lesion is found, the DNA wraps around the other UvrB subunit that will check the other stand for damage. In Listeria innocua serovar 6a (strain ATCC BAA-680 / CLIP 11262), this protein is UvrABC system protein B.